Reading from the N-terminus, the 438-residue chain is UPF0229 protein R01398 (438 aa).

The disordered stretch occupies residues 55 to 107 (PARGVNEPAFQPDSNSGERRHVLPGNREFAAGDRIPKRGSGGGAGNAGAGTGQ). Residues 93–105 (GSGGGAGNAGAGT) are compositionally biased toward gly residues.

The protein belongs to the UPF0229 family.

The protein is UPF0229 protein R01398 of Rhizobium meliloti (strain 1021) (Ensifer meliloti).